Here is a 119-residue protein sequence, read N- to C-terminus: Dihydroneopterin aldolase (119 aa).

Residues Glu21, Tyr53, and 72–73 (IE) each bind substrate. Lys99 acts as the Proton donor/acceptor in catalysis.

It belongs to the DHNA family.

It catalyses the reaction 7,8-dihydroneopterin = 6-hydroxymethyl-7,8-dihydropterin + glycolaldehyde. It participates in cofactor biosynthesis; tetrahydrofolate biosynthesis; 2-amino-4-hydroxy-6-hydroxymethyl-7,8-dihydropteridine diphosphate from 7,8-dihydroneopterin triphosphate: step 3/4. In terms of biological role, catalyzes the conversion of 7,8-dihydroneopterin to 6-hydroxymethyl-7,8-dihydropterin. This chain is Dihydroneopterin aldolase (folB), found in Streptococcus pyogenes serotype M3 (strain ATCC BAA-595 / MGAS315).